The primary structure comprises 92 residues: Protease inhibitors (92 aa).

Positions 1–19 (MKFALALCAAVLLVVLVQA) are cleaved as a signal peptide. Pacifastin domains follow at residues 20-54 (EEKC…CQPA) and 57-92 (EISC…CPNQ). Intrachain disulfides connect Cys-23-Cys-38, Cys-33-Cys-51, Cys-36-Cys-46, Cys-60-Cys-75, Cys-70-Cys-89, and Cys-73-Cys-84. An O-linked (Fuc) threonine glycan is attached at Thr-65.

This sequence belongs to the protease inhibitor I19 family. As to expression, brain and fat body.

The protein localises to the secreted. Both LCMI I and II are inhibitors of chymotrypsin and elastase (in vitro). They both inhibit the prophenol oxidase activation cascade. In Locusta migratoria (Migratory locust), this protein is Protease inhibitors.